The sequence spans 31 residues: Cytochrome b6-f complex subunit 6 (31 aa).

A helical transmembrane segment spans residues 4 to 26 (ITSYFGFLLTALTITSALFIGLS).

Belongs to the PetL family. As to quaternary structure, the 4 large subunits of the cytochrome b6-f complex are cytochrome b6, subunit IV (17 kDa polypeptide, PetD), cytochrome f and the Rieske protein, while the 4 small subunits are PetG, PetL, PetM and PetN. The complex functions as a dimer.

The protein resides in the plastid. The protein localises to the chloroplast thylakoid membrane. In terms of biological role, component of the cytochrome b6-f complex, which mediates electron transfer between photosystem II (PSII) and photosystem I (PSI), cyclic electron flow around PSI, and state transitions. PetL is important for photoautotrophic growth as well as for electron transfer efficiency and stability of the cytochrome b6-f complex. This chain is Cytochrome b6-f complex subunit 6, found in Lactuca sativa (Garden lettuce).